The primary structure comprises 178 residues: Large ribosomal subunit protein uL6 (178 aa).

This sequence belongs to the universal ribosomal protein uL6 family. Part of the 50S ribosomal subunit.

Functionally, this protein binds to the 23S rRNA, and is important in its secondary structure. It is located near the subunit interface in the base of the L7/L12 stalk, and near the tRNA binding site of the peptidyltransferase center. In Streptococcus pneumoniae (strain 70585), this protein is Large ribosomal subunit protein uL6.